A 358-amino-acid polypeptide reads, in one-letter code: tRNA-specific 2-thiouridylase MnmA (358 aa).

Residues 6-13 and methionine 32 each bind ATP; that span reads ALSGGVDS. The Nucleophile role is filled by cysteine 103. A disulfide bridge links cysteine 103 with cysteine 201. Glycine 127 contributes to the ATP binding site. The interaction with tRNA stretch occupies residues 151 to 153; the sequence is KDQ. Cysteine 201 serves as the catalytic Cysteine persulfide intermediate.

Belongs to the MnmA/TRMU family.

The protein resides in the cytoplasm. It carries out the reaction S-sulfanyl-L-cysteinyl-[protein] + uridine(34) in tRNA + AH2 + ATP = 2-thiouridine(34) in tRNA + L-cysteinyl-[protein] + A + AMP + diphosphate + H(+). Catalyzes the 2-thiolation of uridine at the wobble position (U34) of tRNA, leading to the formation of s(2)U34. The polypeptide is tRNA-specific 2-thiouridylase MnmA (Thermotoga petrophila (strain ATCC BAA-488 / DSM 13995 / JCM 10881 / RKU-1)).